A 229-amino-acid chain; its full sequence is Large ribosomal subunit protein uL1 (229 aa).

In terms of assembly, part of the 50S ribosomal subunit.

Its function is as follows. Directly binds to 23S rRNA. Forms what is known as the L1 stalk, which protrudes beyond the 70S ribosome surface. The stalk is preferentially stabilized in 70S versus 50S crystals. Interacts with the E site tRNA, blocking the exit path. This blockage implies that this section of the ribosome must be able to move to release the deacetylated tRNA. Protein L1 is also a translational repressor protein, it controls the translation of the L11 operon by binding to its mRNA. The protein is Large ribosomal subunit protein uL1 (rplA) of Thermus thermophilus (strain ATCC 27634 / DSM 579 / HB8).